Consider the following 183-residue polypeptide: tRNA-splicing endonuclease (183 aa).

Active-site residues include tyrosine 120, histidine 128, and lysine 159.

Belongs to the tRNA-intron endonuclease family. Archaeal short subfamily. As to quaternary structure, homotetramer; although the tetramer contains four active sites, only two participate in the cleavage. Therefore, it should be considered as a dimer of dimers.

It carries out the reaction pretRNA = a 3'-half-tRNA molecule with a 5'-OH end + a 5'-half-tRNA molecule with a 2',3'-cyclic phosphate end + an intron with a 2',3'-cyclic phosphate and a 5'-hydroxyl terminus.. Endonuclease that removes tRNA introns. Cleaves pre-tRNA at the 5'- and 3'-splice sites to release the intron. The products are an intron and two tRNA half-molecules bearing 2',3' cyclic phosphate and 5'-OH termini. Recognizes a pseudosymmetric substrate in which 2 bulged loops of 3 bases are separated by a stem of 4 bp. The polypeptide is tRNA-splicing endonuclease (Pyrobaculum islandicum (strain DSM 4184 / JCM 9189 / GEO3)).